Reading from the N-terminus, the 610-residue chain is MPEYRSKTSTYGRNMAGARALWRATGMKDDDFQKPIIAIANSFTQFVPGHVHLKDLGQLVAREIERLGGVAKEFNTIAVDDGIAMGHDGMLYSLPSREIIADSVEYMANAHCADALVCISNCDKITPGMLMASLRLNIPTVFVSGGPMEAGKTKLTDHKLDLVDAMVLAADPHASDEEVAAVERSACPTCGSCSGMFTANSMNCLTEALGLSLPGNGTVVATHSDRKQLFLNAGRTVIELCHRWYGNEDATALPRGIATFAAFENAITLDIAMGGSTNTILHLLAAAQEAEVPFTMQDIDRLSRNVPQLCKVAPNTQKYHIEDVHRAGGIFGILAELARGNLLHTDVATVHSKTLGEAIATWDIIGTQDEAVHTFYKAGPAGISTQVAFSQSTRWPSLDTDRTEGCIRDMEHAFSKEGGLAVLYGNIAQDGCVVKTAGVDASIHVFEGSALVYESQEAAVKGILSDEVQPGMIVVIRYEGPKGGPGMQEMLYPTSYLKSKGLGKQCALFTDGRFSGGTSGLSIGHASPEAAAGGAIGLIRDGDRIRIDIPQRAINVLISEEELASRRLEQHAIGWKPAQSRTRKVSSALKAYALLATSADKGAVRNKTLL.

Asp81 provides a ligand contact to Mg(2+). Cys122 contacts [2Fe-2S] cluster. Mg(2+)-binding residues include Asp123 and Lys124. The residue at position 124 (Lys124) is an N6-carboxylysine. Cys193 serves as a coordination point for [2Fe-2S] cluster. Glu489 lines the Mg(2+) pocket. The active-site Proton acceptor is Ser515.

The protein belongs to the IlvD/Edd family. As to quaternary structure, homodimer. [2Fe-2S] cluster serves as cofactor. Mg(2+) is required as a cofactor.

It catalyses the reaction (2R)-2,3-dihydroxy-3-methylbutanoate = 3-methyl-2-oxobutanoate + H2O. The enzyme catalyses (2R,3R)-2,3-dihydroxy-3-methylpentanoate = (S)-3-methyl-2-oxopentanoate + H2O. It functions in the pathway amino-acid biosynthesis; L-isoleucine biosynthesis; L-isoleucine from 2-oxobutanoate: step 3/4. Its pathway is amino-acid biosynthesis; L-valine biosynthesis; L-valine from pyruvate: step 3/4. Its function is as follows. Functions in the biosynthesis of branched-chain amino acids. Catalyzes the dehydration of (2R,3R)-2,3-dihydroxy-3-methylpentanoate (2,3-dihydroxy-3-methylvalerate) into 2-oxo-3-methylpentanoate (2-oxo-3-methylvalerate) and of (2R)-2,3-dihydroxy-3-methylbutanoate (2,3-dihydroxyisovalerate) into 2-oxo-3-methylbutanoate (2-oxoisovalerate), the penultimate precursor to L-isoleucine and L-valine, respectively. This is Dihydroxy-acid dehydratase from Xylella fastidiosa (strain 9a5c).